The sequence spans 500 residues: Glucose-6-phosphate isomerase (500 aa).

The active-site Proton donor is E332. Catalysis depends on residues H363 and K473.

The protein belongs to the GPI family.

The protein resides in the cytoplasm. It catalyses the reaction alpha-D-glucose 6-phosphate = beta-D-fructose 6-phosphate. It participates in carbohydrate biosynthesis; gluconeogenesis. Its pathway is carbohydrate degradation; glycolysis; D-glyceraldehyde 3-phosphate and glycerone phosphate from D-glucose: step 2/4. Functionally, catalyzes the reversible isomerization of glucose-6-phosphate to fructose-6-phosphate. This chain is Glucose-6-phosphate isomerase, found in Rhizorhabdus wittichii (strain DSM 6014 / CCUG 31198 / JCM 15750 / NBRC 105917 / EY 4224 / RW1) (Sphingomonas wittichii).